Consider the following 261-residue polypeptide: Lytic polysaccharide monooxygenase-like protein X325 (261 aa).

The first 17 residues, 1–17 (MQLSALALATLLATANA), serve as a signal peptide directing secretion. Residues histidine 18, histidine 64, and aspartate 133 each coordinate Cu(2+). 2 cysteine pairs are disulfide-bonded: cysteine 39/cysteine 139 and cysteine 108/cysteine 155. N-linked (GlcNAc...) asparagine glycosylation is found at asparagine 157 and asparagine 183. Residues 174–210 (LAENTQGSGNSSGHAHGSSGSGSASASKTDSKSSAAS) are disordered. Low complexity predominate over residues 180–210 (GSGNSSGHAHGSSGSGSASASKTDSKSSAAS). Asparagine 238 carries the GPI-anchor amidated asparagine lipid modification. A propeptide spans 239 to 261 (SGSLAYVNGALAIGGVVAAALLI) (removed in mature form).

Belongs to the X325 family. Cu(2+) serves as cofactor.

The protein resides in the cell membrane. In terms of biological role, lytic polysaccharide monooxygenase-like protein that has diverged to biological functions other than polysaccharide degradation since it does not perform oxidative cleavage of polysaccharides. Acts as a cell surface-bound protein that functions in the copper-accumulation pathway. This is Lytic polysaccharide monooxygenase-like protein X325 from Yarrowia lipolytica (strain CLIB 122 / E 150) (Yeast).